Reading from the N-terminus, the 196-residue chain is Orotate phosphoribosyltransferase (196 aa).

117 to 125 (EDIVTTGLS) is a binding site for 5-phospho-alpha-D-ribose 1-diphosphate. Orotate is bound by residues T121 and R149.

This sequence belongs to the purine/pyrimidine phosphoribosyltransferase family. PyrE subfamily. In terms of assembly, homodimer. The cofactor is Mg(2+).

The catalysed reaction is orotidine 5'-phosphate + diphosphate = orotate + 5-phospho-alpha-D-ribose 1-diphosphate. It participates in pyrimidine metabolism; UMP biosynthesis via de novo pathway; UMP from orotate: step 1/2. Functionally, catalyzes the transfer of a ribosyl phosphate group from 5-phosphoribose 1-diphosphate to orotate, leading to the formation of orotidine monophosphate (OMP). The sequence is that of Orotate phosphoribosyltransferase from Methylorubrum populi (strain ATCC BAA-705 / NCIMB 13946 / BJ001) (Methylobacterium populi).